A 493-amino-acid polypeptide reads, in one-letter code: Fizzy-related protein homolog (493 aa).

3 disordered regions span residues 31–51, 64–88, and 105–166; these read LTPA…FIPS, INEN…GKDG, and EKVQ…SPRK. A Phosphothreonine modification is found at threonine 32. The span at 32 to 42 shows a compositional bias: polar residues; sequence TPANSPVSSPS. Serine 36 is subject to Phosphoserine. An N6-acetyllysine modification is found at lysine 69. 2 stretches are compositionally biased toward basic and acidic residues: residues 76 to 86 and 106 to 126; these read KAKDATSDNGK and KVQD…EHKG. Residues serine 133, serine 138, serine 146, and serine 151 each carry the phosphoserine modification. Positions 146-160 are enriched in polar residues; the sequence is SPYSLSPVSNKSQKL. N6-acetyllysine is present on lysine 159. 7 WD repeats span residues 182-222, 227-266, 269-306, 311-350, 353-395, 397-438, and 441-480; these read PELQ…VTRL, VEGD…KLSM, GHTA…LQSE, GHRQ…PVQQ, EHLA…PLQC, DTGS…QVAK, and GHSY…RSTK.

The protein belongs to the WD repeat CDC20/Fizzy family. As to quaternary structure, the unphosphorylated form interacts with APC/C during mitosis. Interacts with NINL. Interacts (in complex with the anaphase promoting complex APC) with MAD2L2; inhibits FZR1-mediated APC/C activation. Interacts with SIRT2. Interacts with USP37. Interacts (via WD repeats) with MAK. Interacts with RBBP8/CtIP; this interaction leads to RBBP8 proteasomal degradation. Interacts with HECW2. Interacts with SASS6; the interaction is regulated by CENATAC and leads to SASS6 proteasomal degradation. Interacts (via N-terminus) with CCNF. Interacts with CDC6. Interacts with TK1 (via the KEN box). Acetylated. Deacetylated by SIRT2 at Lys-69 and Lys-159; deacetylation enhances the interaction of FZR1 with CDC27, leading to activation of anaphase promoting complex/cyclosome (APC/C). Post-translationally, following DNA damage, it is dephosphorylated by CDC14B in G2 phase, leading to its reassociation with the APC/C, and allowing an efficient G2 DNA damage checkpoint. Phosphorylated by MAK.

Its pathway is protein modification; protein ubiquitination. In terms of biological role, substrate-specific adapter for the anaphase promoting complex/cyclosome (APC/C) E3 ubiquitin-protein ligase complex. Associates with the APC/C in late mitosis, in replacement of CDC20, and activates the APC/C during anaphase and telophase. The APC/C remains active in degrading substrates to ensure that positive regulators of the cell cycle do not accumulate prematurely. At the G1/S transition FZR1 is phosphorylated, leading to its dissociation from the APC/C. Following DNA damage, it is required for the G2 DNA damage checkpoint: its dephosphorylation and reassociation with the APC/C leads to the ubiquitination of PLK1, preventing entry into mitosis. Acts as an adapter for APC/C to target the DNA-end resection factor RBBP8/CtIP for ubiquitination and subsequent proteasomal degradation. Through the regulation of RBBP8/CtIP protein turnover, may play a role in DNA damage response, favoring DNA double-strand repair through error-prone non-homologous end joining (NHEJ) over error-free, RBBP8-mediated homologous recombination (HR). The chain is Fizzy-related protein homolog (Fzr1) from Mus musculus (Mouse).